The following is a 1263-amino-acid chain: Multidrug resistance protein sirA (1263 aa).

The tract at residues 1-21 (MAEPESEKPSSAQGGGLPSSD) is disordered. The next 4 membrane-spanning stretches (helical) occupy residues 57–77 (LISA…ILFI), 104–124 (IALY…IFTN), 179–199 (KIGL…IGFV), and 206–226 (FILT…SGFM). An ABC transmembrane type-1 1 domain is found at 57-347 (LISAFFAAVS…VGPHLQAMSL (291 aa)). Asn232 carries an N-linked (GlcNAc...) asparagine glycan. The next 2 membrane-spanning stretches (helical) occupy residues 284–304 (VMGW…GLAI) and 318–338 (VGAI…FGNV). Residues 380–625 (IEFRNVSHVY…EGLYQTFVRR (246 aa)) form the ABC transporter 1 domain. N-linked (GlcNAc...) asparagine glycosylation occurs at Asn384. 415–422 (GASGSGKS) contacts ATP. N-linked (GlcNAc...) asparagine glycosylation is present at Asn469. The segment at 635–672 (PPHARITPAVDTPASPQHRLSEKTGSIYGQGESEAADK) is disordered. 6 helical membrane passes run 699–719 (VTGI…SVFF), 740–760 (FWAA…GVQG), 817–839 (VFLG…SLAV), 843–865 (LTLV…LKLV), 930–950 (LSEA…ATLV), and 960–980 (FFIV…VFAF). In terms of domain architecture, ABC transmembrane type-1 2 spans 699-986 (VTGIASAVIS…VFAFAPDFGK (288 aa)). The region spanning 1021–1259 (VDVSNVVFYY…RGSYYDSVNL (239 aa)) is the ABC transporter 2 domain. 1056–1063 (GGSGSGKS) contacts ATP.

Belongs to the ABC transporter superfamily. ABCB family. Multidrug resistance exporter (TC 3.A.1.201) subfamily.

The protein resides in the cell membrane. The enzyme catalyses ATP + H2O + xenobioticSide 1 = ADP + phosphate + xenobioticSide 2.. Functionally, sirodesmin transporter that provides the dual role of sirodesmin export and self-protection. Also provides tolerance to gliotoxin. The chain is Multidrug resistance protein sirA from Leptosphaeria maculans (Blackleg fungus).